The chain runs to 222 residues: Cytidylate kinase (222 aa).

G11–T19 provides a ligand contact to ATP.

It belongs to the cytidylate kinase family. Type 1 subfamily.

Its subcellular location is the cytoplasm. It catalyses the reaction CMP + ATP = CDP + ADP. It carries out the reaction dCMP + ATP = dCDP + ADP. The chain is Cytidylate kinase from Cupriavidus necator (strain ATCC 17699 / DSM 428 / KCTC 22496 / NCIMB 10442 / H16 / Stanier 337) (Ralstonia eutropha).